A 447-amino-acid chain; its full sequence is GTPase Der (447 aa).

2 consecutive EngA-type G domains span residues K4–E165 and L180–N357. GTP-binding positions include G10–S17, D57–L61, N119–E122, G186–S193, D233–L237, and N298–D301. The 86-residue stretch at K358–K443 folds into the KH-like domain.

The protein belongs to the TRAFAC class TrmE-Era-EngA-EngB-Septin-like GTPase superfamily. EngA (Der) GTPase family. Associates with the 50S ribosomal subunit.

GTPase that plays an essential role in the late steps of ribosome biogenesis. The polypeptide is GTPase Der (Rickettsia prowazekii (strain Madrid E)).